We begin with the raw amino-acid sequence, 941 residues long: ATP-dependent 6-phosphofructokinase subunit beta (941 aa).

The tract at residues 2–558 (PDASLFNGTS…HMKNFISTNS (557 aa)) is N-terminal catalytic PFK domain 1. ATP contacts are provided by residues Gly-191, 255 to 256 (RC), and 285 to 288 (GDGS). Asp-286 serves as a coordination point for Mg(2+). Beta-D-fructose 6-phosphate-binding positions include 331 to 333 (SID), Arg-368, 375 to 377 (MGR), Glu-432, Arg-460, and 466 to 469 (HVQR). Asp-333 serves as the catalytic Proton acceptor. The interval 559 to 572 (ADHVPPSLPLEKRK) is interdomain linker. The tract at residues 573–941 (KVAIINVGAP…SDMLSGRTSL (369 aa)) is C-terminal regulatory PFK domain 2. Beta-D-fructose 2,6-bisphosphate contacts are provided by residues Arg-643, 701 to 705 (TISNN), Arg-739, 746 to 748 (QGG), Glu-806, Lys-832, 838 to 841 (HVQQ), and Arg-918.

It belongs to the phosphofructokinase type A (PFKA) family. ATP-dependent PFK group I subfamily. Eukaryotic two domain clade 'E' sub-subfamily. As to quaternary structure, heterododecamer of 4 alpha, 4 beta and 4 gamma chains. The gamma chain bridges the N-terminal halves of the alpha and beta subunits. Requires Mg(2+) as cofactor.

The protein localises to the cytoplasm. The enzyme catalyses beta-D-fructose 6-phosphate + ATP = beta-D-fructose 1,6-bisphosphate + ADP + H(+). Its pathway is carbohydrate degradation; glycolysis; D-glyceraldehyde 3-phosphate and glycerone phosphate from D-glucose: step 3/4. With respect to regulation, allosterically activated by ADP, AMP, or fructose 2,6-bisphosphate, and allosterically inhibited by ATP or citrate. Catalyzes the phosphorylation of D-fructose 6-phosphate to fructose 1,6-bisphosphate by ATP, the first committing step of glycolysis. The chain is ATP-dependent 6-phosphofructokinase subunit beta (PFK2) from Komagataella phaffii (strain GS115 / ATCC 20864) (Yeast).